Here is a 70-residue protein sequence, read N- to C-terminus: ATP synthase subunit c (70 aa).

Helical transmembrane passes span 3-23 (ALAA…IGIA) and 44-64 (LFFI…VIAI).

It belongs to the ATPase C chain family. F-type ATPases have 2 components, F(1) - the catalytic core - and F(0) - the membrane proton channel. F(1) has five subunits: alpha(3), beta(3), gamma(1), delta(1), epsilon(1). F(0) has three main subunits: a(1), b(2) and c(10-14). The alpha and beta chains form an alternating ring which encloses part of the gamma chain. F(1) is attached to F(0) by a central stalk formed by the gamma and epsilon chains, while a peripheral stalk is formed by the delta and b chains.

The protein resides in the cell membrane. Its function is as follows. F(1)F(0) ATP synthase produces ATP from ADP in the presence of a proton or sodium gradient. F-type ATPases consist of two structural domains, F(1) containing the extramembraneous catalytic core and F(0) containing the membrane proton channel, linked together by a central stalk and a peripheral stalk. During catalysis, ATP synthesis in the catalytic domain of F(1) is coupled via a rotary mechanism of the central stalk subunits to proton translocation. Functionally, key component of the F(0) channel; it plays a direct role in translocation across the membrane. A homomeric c-ring of between 10-14 subunits forms the central stalk rotor element with the F(1) delta and epsilon subunits. The sequence is that of ATP synthase subunit c from Caldicellulosiruptor saccharolyticus (strain ATCC 43494 / DSM 8903 / Tp8T 6331).